A 1400-amino-acid chain; its full sequence is S phase cyclin A-associated protein in the endoplasmic reticulum (1400 aa).

4 disordered regions span residues 36–61, 226–277, 517–550, and 701–723; these read ESKD…GTHK, VKAH…IRSR, PARP…HEEK, and RIEQ…RARD. Polar residues predominate over residues 231 to 243; sequence TGSTASSEITPAQ. Over residues 539–550 the composition is skewed to basic and acidic residues; sequence TIAESKKKHEEK. The C2H2-type zinc-finger motif lies at 792-816; sequence KQCSLCNVLISSEVYLFSHVKGRKH. Ser832 is subject to Phosphoserine.

As to quaternary structure, interacts with CCNA2/CDK2 complex, but not with CCNA2/CDC2, CCNB1/CDC2 or CCNE1/CDK2 complexes, at multiple phases of the cell cycle, including S and G2/M. Phosphorylated in vitro by the CCNA2/CDK2 complex. As to expression, widely expressed with high expression in testis. Isoform 1 is detected in various tissues, including retina, fetal and adult brain. Isoform 2 is expressed in the retina at high levels, and in the brain at very low levels.

Its subcellular location is the endoplasmic reticulum. It localises to the nucleus. Functionally, CCNA2/CDK2 regulatory protein that transiently maintains CCNA2 in the cytoplasm. The sequence is that of S phase cyclin A-associated protein in the endoplasmic reticulum from Homo sapiens (Human).